Here is a 454-residue protein sequence, read N- to C-terminus: tRNA modification GTPase MnmE (454 aa).

(6S)-5-formyl-5,6,7,8-tetrahydrofolate is bound by residues arginine 23, glutamate 80, and lysine 120. Residues 216-377 (GMKVVIAGRP…LRNHLKQSMG (162 aa)) form the TrmE-type G domain. K(+) is bound at residue asparagine 226. GTP is bound by residues 226-231 (NAGKSS), 245-251 (TDIAGTT), 270-273 (DTAG), 335-338 (NKAD), and 358-360 (SAR). Serine 230 is a Mg(2+) binding site. Residues threonine 245, isoleucine 247, and threonine 250 each coordinate K(+). Threonine 251 lines the Mg(2+) pocket. Residue lysine 454 participates in (6S)-5-formyl-5,6,7,8-tetrahydrofolate binding.

The protein belongs to the TRAFAC class TrmE-Era-EngA-EngB-Septin-like GTPase superfamily. TrmE GTPase family. In terms of assembly, homodimer. Heterotetramer of two MnmE and two MnmG subunits. The cofactor is K(+).

The protein resides in the cytoplasm. Functionally, exhibits a very high intrinsic GTPase hydrolysis rate. Involved in the addition of a carboxymethylaminomethyl (cmnm) group at the wobble position (U34) of certain tRNAs, forming tRNA-cmnm(5)s(2)U34. In Salmonella typhi, this protein is tRNA modification GTPase MnmE.